The primary structure comprises 333 residues: Probable G-protein coupled receptor 33 (333 aa).

Residues 1–30 (MDLINSTDYLINASTLVRNSTQFLAPASKM) are Extracellular-facing. Asn-5, Asn-12, and Asn-19 each carry an N-linked (GlcNAc...) asparagine glycan. A helical transmembrane segment spans residues 31–53 (IIALSLYISSIIGTITNGLYLWV). The Cytoplasmic segment spans residues 54–64 (LRFKMKQTVNT). Residues 65-86 (LLFFHLILSYFISTMILPFMAT) form a helical membrane-spanning segment. Residues 87–103 (SQLQDNHWNFGTALCKV) lie on the Extracellular side of the membrane. Cys-101 and Cys-179 are disulfide-bonded. A helical membrane pass occupies residues 104 to 124 (FNGTLSLGMFTSVFFLSAIGL). Over 125–143 (DRYLLTLHPVWSQQHRTPR) the chain is Cytoplasmic. The chain crosses the membrane as a helical span at residues 144–165 (WASSIVLGVWISAAALSIPYLI). Residues 166–209 (FRQTHHDRKGKVTCQNNYAVSTNWESKEMQALRQWIHVACFISR) are Extracellular-facing. The chain crosses the membrane as a helical span at residues 210–230 (FLLGFLLPFFIIIFCYERVAS). Residues 231 to 246 (KVKERSLFKSSKPFKV) are Cytoplasmic-facing. Residues 247–268 (MMTAIISFFVCWMPYHIHQGLL) form a helical membrane-spanning segment. The Extracellular portion of the chain corresponds to 269–283 (LTTNQSLLLELTLIL). Asn-272 is a glycosylation site (N-linked (GlcNAc...) asparagine). The chain crosses the membrane as a helical span at residues 284 to 303 (TVLTTSFNTIFSPTLYLFVG). Topologically, residues 304-333 (ENFKKVFKKSILALFESTFSEDSSVERTQT) are cytoplasmic.

The protein belongs to the G-protein coupled receptor 1 family.

Its subcellular location is the cell membrane. In terms of biological role, orphan receptor; could be a chemoattractant receptor. The protein is Probable G-protein coupled receptor 33 (GPR33) of Pan troglodytes (Chimpanzee).